Reading from the N-terminus, the 392-residue chain is Chaperone protein DnaJ (392 aa).

In terms of domain architecture, J spans 5 to 75 (DYYEVLGIDK…QKKQQYDQFG (71 aa)). The segment at 148–229 (GVEKTIKYKR…CHGTGTAKET (82 aa)) adopts a CR-type zinc-finger fold. Positions 161, 164, 177, 180, 203, 206, 217, and 220 each coordinate Zn(2+). CXXCXGXG motif repeat units follow at residues 161 to 168 (CENCHGTG), 177 to 184 (CPTCNGQG), 203 to 210 (CPDCHGTG), and 217 to 224 (CKHCHGTG).

It belongs to the DnaJ family. Homodimer. Zn(2+) is required as a cofactor.

The protein resides in the cytoplasm. Functionally, participates actively in the response to hyperosmotic and heat shock by preventing the aggregation of stress-denatured proteins and by disaggregating proteins, also in an autonomous, DnaK-independent fashion. Unfolded proteins bind initially to DnaJ; upon interaction with the DnaJ-bound protein, DnaK hydrolyzes its bound ATP, resulting in the formation of a stable complex. GrpE releases ADP from DnaK; ATP binding to DnaK triggers the release of the substrate protein, thus completing the reaction cycle. Several rounds of ATP-dependent interactions between DnaJ, DnaK and GrpE are required for fully efficient folding. Also involved, together with DnaK and GrpE, in the DNA replication of plasmids through activation of initiation proteins. This Fusobacterium nucleatum subsp. nucleatum (strain ATCC 25586 / DSM 15643 / BCRC 10681 / CIP 101130 / JCM 8532 / KCTC 2640 / LMG 13131 / VPI 4355) protein is Chaperone protein DnaJ.